The primary structure comprises 95 residues: Protein TusB (95 aa).

It belongs to the DsrH/TusB family. Heterohexamer, formed by a dimer of trimers. The hexameric TusBCD complex contains 2 copies each of TusB, TusC and TusD. The TusBCD complex interacts with TusE.

Its subcellular location is the cytoplasm. In terms of biological role, part of a sulfur-relay system required for 2-thiolation of 5-methylaminomethyl-2-thiouridine (mnm(5)s(2)U) at tRNA wobble positions. The chain is Protein TusB from Escherichia fergusonii (strain ATCC 35469 / DSM 13698 / CCUG 18766 / IAM 14443 / JCM 21226 / LMG 7866 / NBRC 102419 / NCTC 12128 / CDC 0568-73).